Consider the following 337-residue polypeptide: Glyceraldehyde-3-phosphate dehydrogenase, cytosolic (337 aa).

Residues 1-151 (MAKVKVGING…YKSDLNIVSN (151 aa)) are binding to NAD. NAD(+) is bound by residues 13–14 (RI), D35, and R82. Residues 152 to 337 (ASCTTNCLAP…DLIMHISKCQ (186 aa)) are catalytic. D-glyceraldehyde 3-phosphate contacts are provided by residues 153-155 (SCT), T184, 213-214 (TG), and R236. Residue C154 is the Nucleophile of the active site. N318 is an NAD(+) binding site.

Belongs to the glyceraldehyde-3-phosphate dehydrogenase family. In terms of assembly, homotetramer.

It localises to the cytoplasm. The catalysed reaction is D-glyceraldehyde 3-phosphate + phosphate + NAD(+) = (2R)-3-phospho-glyceroyl phosphate + NADH + H(+). It functions in the pathway carbohydrate degradation; glycolysis; pyruvate from D-glyceraldehyde 3-phosphate: step 1/5. Key enzyme in glycolysis that catalyzes the first step of the pathway by converting D-glyceraldehyde 3-phosphate (G3P) into 3-phospho-D-glyceroyl phosphate. Essential for the maintenance of cellular ATP levels and carbohydrate metabolism. The sequence is that of Glyceraldehyde-3-phosphate dehydrogenase, cytosolic (GAPC) from Mesembryanthemum crystallinum (Common ice plant).